A 260-amino-acid chain; its full sequence is Ditrans,polycis-undecaprenyl-diphosphate synthase ((2E,6E)-farnesyl-diphosphate specific) (260 aa).

Residue Asp-20 is part of the active site. Asp-20 contributes to the Mg(2+) binding site. Substrate-binding positions include 21 to 24, Trp-25, Arg-33, His-37, and 65 to 67; these read GNGR and SSE. Asn-68 serves as the catalytic Proton acceptor. Trp-69, Arg-71, and Arg-188 together coordinate substrate. His-193 serves as a coordination point for Mg(2+). 194 to 196 provides a ligand contact to substrate; sequence RIS. Residue Glu-207 participates in Mg(2+) binding.

This sequence belongs to the UPP synthase family. In terms of assembly, homodimer. The cofactor is Mg(2+).

The enzyme catalyses 8 isopentenyl diphosphate + (2E,6E)-farnesyl diphosphate = di-trans,octa-cis-undecaprenyl diphosphate + 8 diphosphate. Functionally, catalyzes the sequential condensation of isopentenyl diphosphate (IPP) with (2E,6E)-farnesyl diphosphate (E,E-FPP) to yield (2Z,6Z,10Z,14Z,18Z,22Z,26Z,30Z,34E,38E)-undecaprenyl diphosphate (di-trans,octa-cis-UPP). UPP is the precursor of glycosyl carrier lipid in the biosynthesis of bacterial cell wall polysaccharide components such as peptidoglycan and lipopolysaccharide. This chain is Ditrans,polycis-undecaprenyl-diphosphate synthase ((2E,6E)-farnesyl-diphosphate specific), found in Wigglesworthia glossinidia brevipalpis.